Consider the following 631-residue polypeptide: Phosphomethylpyrimidine synthase (631 aa).

Substrate is bound by residues N239, M268, Y297, H333, 353–355 (SRG), 394–397 (DGLR), and E433. H437 contacts Zn(2+). Y460 contributes to the substrate binding site. H501 is a binding site for Zn(2+). [4Fe-4S] cluster-binding residues include C581, C584, and C589.

The protein belongs to the ThiC family. As to quaternary structure, homodimer. [4Fe-4S] cluster serves as cofactor.

The enzyme catalyses 5-amino-1-(5-phospho-beta-D-ribosyl)imidazole + S-adenosyl-L-methionine = 4-amino-2-methyl-5-(phosphooxymethyl)pyrimidine + CO + 5'-deoxyadenosine + formate + L-methionine + 3 H(+). It functions in the pathway cofactor biosynthesis; thiamine diphosphate biosynthesis. Catalyzes the synthesis of the hydroxymethylpyrimidine phosphate (HMP-P) moiety of thiamine from aminoimidazole ribotide (AIR) in a radical S-adenosyl-L-methionine (SAM)-dependent reaction. This is Phosphomethylpyrimidine synthase from Escherichia coli O6:H1 (strain CFT073 / ATCC 700928 / UPEC).